The chain runs to 143 residues: MAKEFSRTRRIAQQLQQELAMVLQRDMKDPRIGFVTVNDVDVSRDLSYAKVYVTFFEEDTELVQQKIDALTVAAPYVRTLVAGRMKLRVMPELRFIYDSSLVEGMRMSNLVTQVINKDKAKQQQFTPDTPDNSESVDGEKEQD.

The tract at residues Lys119–Asp143 is disordered. Polar residues predominate over residues Gln122–Ser133.

It belongs to the RbfA family. As to quaternary structure, monomer. Binds 30S ribosomal subunits, but not 50S ribosomal subunits or 70S ribosomes.

The protein localises to the cytoplasm. Its function is as follows. One of several proteins that assist in the late maturation steps of the functional core of the 30S ribosomal subunit. Associates with free 30S ribosomal subunits (but not with 30S subunits that are part of 70S ribosomes or polysomes). Required for efficient processing of 16S rRNA. May interact with the 5'-terminal helix region of 16S rRNA. The chain is Ribosome-binding factor A from Shewanella frigidimarina (strain NCIMB 400).